The chain runs to 338 residues: HTH-type transcriptional regulator SyrM 1 (338 aa).

Positions 35–92 constitute an HTH lysR-type domain; that stretch reads LDLNTLLALEALLEHRNVTQAARHLGLSQPSVSRALIRLRGVFNDDLLVRGSSGMVPT. Residues 52 to 72 constitute a DNA-binding region (H-T-H motif); that stretch reads VTQAARHLGLSQPSVSRALIR.

This sequence belongs to the LysR transcriptional regulatory family.

Transcriptional activator that regulates the expression of genes involved in symbiosis. Among other targets it acts on the nolWBTUV operon. The polypeptide is HTH-type transcriptional regulator SyrM 1 (syrM1) (Sinorhizobium fredii (strain NBRC 101917 / NGR234)).